Reading from the N-terminus, the 492-residue chain is V-type proton ATPase subunit B 2 (492 aa).

This sequence belongs to the ATPase alpha/beta chains family. As to quaternary structure, V-ATPase is a heteromultimeric enzyme composed of a peripheral catalytic V1 complex (main components: subunits A, B, C, D, E, and F) attached to an integral membrane V0 proton pore complex (main component: the proteolipid protein).

In terms of biological role, non-catalytic subunit of the peripheral V1 complex of vacuolar ATPase. V-ATPase is responsible for acidifying a variety of intracellular compartments in eukaryotic cells. The protein is V-type proton ATPase subunit B 2 of Acetabularia acetabulum (Mermaid's wine glass).